Consider the following 156-residue polypeptide: Arginine repressor (156 aa).

Belongs to the ArgR family.

The protein resides in the cytoplasm. It functions in the pathway amino-acid biosynthesis; L-arginine biosynthesis [regulation]. Functionally, regulates arginine biosynthesis genes. The chain is Arginine repressor from Citrobacter koseri (strain ATCC BAA-895 / CDC 4225-83 / SGSC4696).